A 247-amino-acid polypeptide reads, in one-letter code: Centromere protein H (247 aa).

Met1 bears the N-acetylmethionine mark. Acidic residues predominate over residues 1-14 (MEEQPQMQDADEPA). Positions 1–34 (MEEQPQMQDADEPADSGGEGRAGGPPQVAGAQAA) are disordered. Position 16 is a phosphoserine (Ser16). Residues 24-34 (GPPQVAGAQAA) are compositionally biased toward low complexity. Residues 47 to 192 (RAQTKQQLLE…KIDLDSMENS (146 aa)) adopt a coiled-coil conformation. A Glycyl lysine isopeptide (Lys-Gly) (interchain with G-Cter in SUMO2) cross-link involves residue Lys67. At Thr68 the chain carries Phosphothreonine.

The protein belongs to the CENP-H/MCM16 family. Self-associates. Component of the CENPA-NAC complex, at least composed of CENPA, CENPC, CENPH, CENPM, CENPN, CENPT and CENPU. The CENPA-NAC complex interacts with the CENPA-CAD complex, composed of CENPI, CENPK, CENPL, CENPO, CENPP, CENPQ, CENPR and CENPS. Interacts directly with CENPK. Interacts with KIF2C and NDC80. Interacts with TRIM36.

The protein resides in the nucleus. It localises to the chromosome. It is found in the centromere. Its subcellular location is the kinetochore. Its function is as follows. Component of the CENPA-NAC (nucleosome-associated) complex, a complex that plays a central role in assembly of kinetochore proteins, mitotic progression and chromosome segregation. The CENPA-NAC complex recruits the CENPA-CAD (nucleosome distal) complex and may be involved in incorporation of newly synthesized CENPA into centromeres. Required for chromosome congression and efficiently align the chromosomes on a metaphase plate. In Homo sapiens (Human), this protein is Centromere protein H.